We begin with the raw amino-acid sequence, 117 residues long: UPF0145 protein CV_4322 (117 aa).

It belongs to the UPF0145 family.

The protein is UPF0145 protein CV_4322 of Chromobacterium violaceum (strain ATCC 12472 / DSM 30191 / JCM 1249 / CCUG 213 / NBRC 12614 / NCIMB 9131 / NCTC 9757 / MK).